Reading from the N-terminus, the 267-residue chain is Dihydropteroate synthase (267 aa).

The 251-residue stretch at 1–251 (MTKTKIMGIL…NVELNAKLAK (251 aa)) folds into the Pterin-binding domain. Position 11 (N11) interacts with Mg(2+). (7,8-dihydropterin-6-yl)methyl diphosphate contacts are provided by residues T51, D84, N103, D167, K203, and 239–241 (RVH).

The protein belongs to the DHPS family. Homodimer. It depends on Mg(2+) as a cofactor.

The enzyme catalyses (7,8-dihydropterin-6-yl)methyl diphosphate + 4-aminobenzoate = 7,8-dihydropteroate + diphosphate. Its pathway is cofactor biosynthesis; tetrahydrofolate biosynthesis; 7,8-dihydrofolate from 2-amino-4-hydroxy-6-hydroxymethyl-7,8-dihydropteridine diphosphate and 4-aminobenzoate: step 1/2. In terms of biological role, catalyzes the condensation of para-aminobenzoate (pABA) with 6-hydroxymethyl-7,8-dihydropterin diphosphate (DHPt-PP) to form 7,8-dihydropteroate (H2Pte), the immediate precursor of folate derivatives. The polypeptide is Dihydropteroate synthase (folP) (Staphylococcus aureus (strain Mu50 / ATCC 700699)).